The following is a 426-amino-acid chain: Bone morphogenetic protein 7 (426 aa).

The N-terminal stretch at 1–22 (MNALTVKRRLPVLLFLFHISLS) is a signal peptide. Positions 23–282 (SISSNTILEN…TSDIHLRSVR (260 aa)) are excised as a propeptide. N-linked (GlcNAc...) asparagine glycans are attached at residues asparagine 177, asparagine 307, and asparagine 367. Disulfide bonds link cysteine 325–cysteine 391, cysteine 354–cysteine 423, and cysteine 358–cysteine 425.

The protein belongs to the TGF-beta family. As to quaternary structure, homodimer; disulfide-linked. Interacts with twsg1.

It localises to the secreted. In terms of biological role, growth factor of the TGF-beta superfamily that plays important role in various biological processes, including embryogenesis, hematopoiesis, neurogenesis and skeletal morphogenesis. Initiates the canonical BMP signaling cascade by associating with type I receptor ACVR1 and type II receptor ACVR2A. Once all three components are bound together in a complex at the cell surface, ACVR2A phosphorylates and activates ACVR1. In turn, ACVR1 propagates signal by phosphorylating SMAD1/5/8 that travel to the nucleus and act as activators and repressors of transcription of target genes. The chain is Bone morphogenetic protein 7 (bmp7) from Xenopus laevis (African clawed frog).